A 461-amino-acid chain; its full sequence is Steroidogenic factor 1 (461 aa).

Residues 10–85 (DELCPVCGDK…VGMRLEAVRA (76 aa)) constitute a DNA-binding region (nuclear receptor). The segment at 13 to 33 (CPVCGDKVSGYHYGLLTCESC) adopts an NR C4-type zinc-finger fold. N6-acetyllysine is present on residues lysine 34, lysine 38, and lysine 72. The segment at 49–73 (CTESQSCKIDKTQRKRCPFCRFQKC) adopts an NR C4-type zinc-finger fold. A Glycyl lysine isopeptide (Lys-Gly) (interchain with G-Cter in SUMO) cross-link involves residue lysine 119. Residues 119-150 (KLETGPPMGVAPPPPPPPDYMLPPGLHAPEPK) are disordered. The span at 127–139 (GVAPPPPPPPDYM) shows a compositional bias: pro residues. A Glycyl lysine isopeptide (Lys-Gly) (interchain with G-Cter in SUMO) cross-link involves residue lysine 194. Phosphoserine; by CDK7 is present on serine 203. The NR LBD domain maps to 222 to 459 (GVPELIVQLL…NLLIEMLQAK (238 aa)). The tract at residues 230–461 (LLQLEPDEDQ…LIEMLQAKQT (232 aa)) is important for dimerization. A 1,2-diacyl-sn-glycero-3-phosphocholine is bound by residues glycine 341, tyrosine 436, and lysine 440.

Belongs to the nuclear hormone receptor family. NR5 subfamily. In terms of assembly, binds DNA as a monomer. Part of a complex consisting of SFPQ, NONO and NR5A1. Interacts with NR0B2, NCOA2 and PPARGC1A. Interacts with DGKQ and CDK7. Binds to and activated by HIPK3. Post-translationally, acetylation stimulates the transcriptional activity. Sumoylation reduces CDK7-mediated phosphorylation on Ser-203. In terms of processing, phosphorylated on Ser-203 by CDK7. This phosphorylation promotes transcriptional activity.

The protein resides in the nucleus. Its function is as follows. Transcriptional activator. Seems to be essential for sexual differentiation and formation of the primary steroidogenic tissues. Binds to the Ad4 site found in the promoter region of steroidogenic P450 genes such as CYP11A, CYP11B and CYP21B. Also regulates the AMH/Muellerian inhibiting substance gene as well as the AHCH and STAR genes. 5'-YCAAGGYC-3' and 5'-RRAGGTCA-3' are the consensus sequences for the recognition by NR5A1. The SFPQ-NONO-NR5A1 complex binds to the CYP17 promoter and regulates basal and cAMP-dependent transcriptional activity. Binds phosphatidylcholine and phospholipids with a phosphatidylinositol (PI) headgroup, in particular PI(3,4)P2 and PI(3,4,5)P3. Activated by the phosphorylation of NR5A1 by HIPK3 leading to increased steroidogenic gene expression upon cAMP signaling pathway stimulation. The polypeptide is Steroidogenic factor 1 (NR5A1) (Sus scrofa (Pig)).